Here is a 532-residue protein sequence, read N- to C-terminus: Probable C4-dicarboxylate sensor kinase (532 aa).

Residues Met1–Lys12 are Cytoplasmic-facing. Residues Ile13 to Leu33 traverse the membrane as a helical segment. Topologically, residues Gly34–Gln175 are extracellular. A helical transmembrane segment spans residues Pro176–Ala196. The Cytoplasmic segment spans residues Ser197–Gly532. The region spanning Val216–Leu279 is the PAS domain. The Histidine kinase domain occupies Ser315–Arg531. Position 339 is a phosphohistidine; by autocatalysis (His339).

It is found in the cell membrane. It carries out the reaction ATP + protein L-histidine = ADP + protein N-phospho-L-histidine.. Its function is as follows. Member of the two-component regulatory system DctS/DctR. Probably activates DctR by phosphorylation. Essential for expression of dctP. The protein is Probable C4-dicarboxylate sensor kinase (dctS) of Halalkalibacterium halodurans (strain ATCC BAA-125 / DSM 18197 / FERM 7344 / JCM 9153 / C-125) (Bacillus halodurans).